The chain runs to 313 residues: Tyrosine recombinase XerC (313 aa).

The 87-residue stretch at 11-97 (NSLQKPLERF…SLRSFFDFLI (87 aa)) folds into the Core-binding (CB) domain. Residues 118-298 (PLPKNLDVDE…DFQHLAQAYD (181 aa)) form the Tyr recombinase domain. Catalysis depends on residues Arg-157, Lys-181, His-250, Arg-253, and His-276. The active-site O-(3'-phospho-DNA)-tyrosine intermediate is the Tyr-285.

The protein belongs to the 'phage' integrase family. XerC subfamily. As to quaternary structure, forms a cyclic heterotetrameric complex composed of two molecules of XerC and two molecules of XerD.

The protein resides in the cytoplasm. Functionally, site-specific tyrosine recombinase, which acts by catalyzing the cutting and rejoining of the recombining DNA molecules. The XerC-XerD complex is essential to convert dimers of the bacterial chromosome into monomers to permit their segregation at cell division. It also contributes to the segregational stability of plasmids. The chain is Tyrosine recombinase XerC from Vibrio campbellii (strain ATCC BAA-1116).